A 1103-amino-acid polypeptide reads, in one-letter code: Kinesin-like protein KIF1C (1103 aa).

Residues 5 to 348 (SVKVAVRVRP…LRYADRTKQI (344 aa)) enclose the Kinesin motor domain. 97–104 (GQTGAGKS) is a binding site for ATP. Position 295 is a phosphoserine (serine 295). 2 coiled-coil regions span residues 359–388 (NARL…SALE) and 438–479 (EEAM…LAEM). The tract at residues 400–438 (ALPAVSSPPAPVSPSSPTTHNGELEPSFSPNTESQIGPE) is disordered. Serine 494 is modified (phosphoserine). Positions 523 to 590 (TRVGQVDMDI…LKSGNRIVMG (68 aa)) constitute an FHA domain. A coiled-coil region spans residues 633 to 674 (EQQGIDIKLEMEKRLQDLENQYRKEKEEADLLLEQQRLYADS). Phosphoserine occurs at positions 674 and 676. Disordered regions lie at residues 808–828 (GEEE…ARGA), 874–924 (LAQD…WERV), and 950–1103 (QGLQ…GAAV). A compositionally biased stretch (gly residues) spans 813-822 (GGAGSGGGSE). The stretch at 828-872 (AEVEDLRAHIDKLTGILQEVKLQNSSKDRELQALRDRMLRMERVI) forms a coiled coil. Low complexity predominate over residues 893 to 910 (PEGSEAAEEAAPSDRMPS). Serine 915 is subject to Phosphoserine. Residues 953 to 962 (QGSGGRGGGL) show a composition bias toward gly residues. Over residues 1021 to 1031 (PSPRRSHHPRR) the composition is skewed to basic residues. Serine 1033 carries the post-translational modification Phosphoserine. Arginine 1041 is modified (omega-N-methylarginine). Residues 1062–1083 (PQPPQPYPAQRPPGPRYPPYTT) are compositionally biased toward pro residues. Residue threonine 1083 is modified to Phosphothreonine. A Phosphoserine modification is found at serine 1092. Residues 1092 to 1103 (SAPDLKESGAAV) are compositionally biased toward basic and acidic residues.

This sequence belongs to the TRAFAC class myosin-kinesin ATPase superfamily. Kinesin family. Unc-104 subfamily. As to quaternary structure, monomer. Interacts with BICD2. In terms of processing, phosphorylated on tyrosine residues. Expressed in all tissues examined, with most abundant expression in heart and skeletal muscle.

It is found in the cytoplasm. The protein resides in the cytoskeleton. Motor required for the retrograde transport of Golgi vesicles to the endoplasmic reticulum. Has a microtubule plus end-directed motility. The protein is Kinesin-like protein KIF1C (KIF1C) of Homo sapiens (Human).